We begin with the raw amino-acid sequence, 206 residues long: Large ribosomal subunit protein eL13y (206 aa).

The disordered stretch occupies residues 182–206; that stretch reads LERTNKRHAGARAKRAADAEKEEKK. The segment covering 186–195 has biased composition (basic residues); it reads NKRHAGARAK. Residues 196-206 are compositionally biased toward basic and acidic residues; it reads RAADAEKEEKK.

The protein belongs to the eukaryotic ribosomal protein eL13 family.

This Brassica napus (Rape) protein is Large ribosomal subunit protein eL13y.